The sequence spans 147 residues: Hemoglobin subunit epsilon (147 aa).

Positions His-3 to His-147 constitute a Globin domain. A phosphoserine mark is found at Ser-14 and Ser-51. Heme b is bound by residues His-64 and His-93.

This sequence belongs to the globin family. Heterotetramer of two alpha chains and two epsilon chains in early embryonic hemoglobin Gower-2; two zeta chains and two epsilon chains in early embryonic hemoglobin Gower-1. Red blood cells.

Functionally, the epsilon chain is a beta-type chain of early mammalian embryonic hemoglobin. The chain is Hemoglobin subunit epsilon (HBE1) from Cebus kaapori (Ka'apor capuchin).